A 65-amino-acid polypeptide reads, in one-letter code: Large ribosomal subunit protein bL35 (65 aa).

Positions 1-20 (MPKMKTNSGSKKRFTLTGTG) are disordered.

It belongs to the bacterial ribosomal protein bL35 family.

The sequence is that of Large ribosomal subunit protein bL35 from Bacteroides thetaiotaomicron (strain ATCC 29148 / DSM 2079 / JCM 5827 / CCUG 10774 / NCTC 10582 / VPI-5482 / E50).